We begin with the raw amino-acid sequence, 151 residues long: uncharacterized protein (151 aa).

Residues 1 to 32 form the signal peptide; it reads MEEAEKAKRRSIELLNETRNCAYSSFVALAEA. The chain crosses the membrane as a helical span at residues 45 to 67; it reads AIGFAGGISGSGHICGALWGSIA.

The protein resides in the membrane. This is an uncharacterized protein from Archaeoglobus fulgidus (strain ATCC 49558 / DSM 4304 / JCM 9628 / NBRC 100126 / VC-16).